The sequence spans 417 residues: SNF1 protein kinase subunit beta-3 (417 aa).

Residues 1–12 (MAGDNPENKDAS) are compositionally biased toward basic and acidic residues. Residues 1–37 (MAGDNPENKDASMLDVSDAASNTTINGKHSADSTNEA) form a disordered region. 4 positions are modified to phosphoserine: Ser-12, Ser-21, Ser-44, and Ser-135. The span at 19 to 37 (AASNTTINGKHSADSTNEA) shows a compositional bias: polar residues. Disordered stretches follow at residues 64 to 155 (SSLI…VEGK) and 250 to 269 (GNEPQQHLAEKKANHVDDSK). The segment covering 118–136 (TGNTLQKMDYQPSQQPDSL) has biased composition (polar residues). The segment covering 137 to 149 (QNQGFQQQQEQQQ) has biased composition (low complexity). Residues 152–342 (VEGKKGRAMM…DQQQNNHQNM (191 aa)) form a kinase-interacting sequence (KIS); required for interaction with SNF1 region. Positions 257-269 (LAEKKANHVDDSK) are enriched in basic and acidic residues. A phosphoserine mark is found at Ser-276 and Ser-279. The association with SNF1 kinase complex (ASC) domain; required for interaction with SNF4 stretch occupies residues 343–417 (AWLTPPQLPP…VTQILYTPLQ (75 aa)).

This sequence belongs to the 5'-AMP-activated protein kinase beta subunit family. Component of the SNF1 kinase complex, a heterotrimeric complex composed of the catalytic alpha subunit SNF1, one of the three related beta subunits SIP1, SIP2 or GAL83, and the regulatory gamma subunit SNF4. The beta subunit serves as a bridge between the catalytic and the regulatory subunit. Interacts (via KIS domain) with SNF1. Interacts (via ASC domain) with SNF4. Interacts with REE1. In terms of processing, phosphorylated by SNF1 in vitro.

The protein resides in the cytoplasm. The protein localises to the nucleus. Its function is as follows. Beta subunit of the SNF1 kinase complex, which is required for transcriptional, metabolic, and developmental adaptations in response to glucose limitation. Has a structural role, mediating heterotrimer formation, and a regulatory role, defining carbon source-regulated subcellular location and substrate specificity of the SNF1 kinase complex. Promotes the relocalization of the SNF1 kinase complex to the nucleus upon shift to nonfermentable carbon sources. The chain is SNF1 protein kinase subunit beta-3 (GAL83) from Saccharomyces cerevisiae (strain ATCC 204508 / S288c) (Baker's yeast).